Reading from the N-terminus, the 89-residue chain is DNA-binding protein HU (89 aa).

It belongs to the bacterial histone-like protein family. In terms of assembly, homodimer. The dimer interacts with the DNA mimic protein DMP12. It also interacts with the monomeric form of the DNA mimic protein DMP19 with 1:1 stoichiometry.

Activity is regulated by the DNA mimic protein DMP12. Activity is inhibited in the presence of the DNA mimic protein DMP19, which interacts with HU and prevents the binding of HU to DNA. Histone-like DNA-binding protein which is capable of wrapping DNA to stabilize it, and thus to prevent its denaturation under extreme environmental conditions. In Neisseria meningitidis serogroup B (strain ATCC BAA-335 / MC58), this protein is DNA-binding protein HU.